The primary structure comprises 494 residues: Aspartyl/glutamyl-tRNA(Asn/Gln) amidotransferase subunit B (494 aa).

Belongs to the GatB/GatE family. GatB subfamily. Heterotrimer of A, B and C subunits.

The catalysed reaction is L-glutamyl-tRNA(Gln) + L-glutamine + ATP + H2O = L-glutaminyl-tRNA(Gln) + L-glutamate + ADP + phosphate + H(+). It catalyses the reaction L-aspartyl-tRNA(Asn) + L-glutamine + ATP + H2O = L-asparaginyl-tRNA(Asn) + L-glutamate + ADP + phosphate + 2 H(+). Functionally, allows the formation of correctly charged Asn-tRNA(Asn) or Gln-tRNA(Gln) through the transamidation of misacylated Asp-tRNA(Asn) or Glu-tRNA(Gln) in organisms which lack either or both of asparaginyl-tRNA or glutaminyl-tRNA synthetases. The reaction takes place in the presence of glutamine and ATP through an activated phospho-Asp-tRNA(Asn) or phospho-Glu-tRNA(Gln). The sequence is that of Aspartyl/glutamyl-tRNA(Asn/Gln) amidotransferase subunit B from Synechococcus sp. (strain ATCC 27144 / PCC 6301 / SAUG 1402/1) (Anacystis nidulans).